Consider the following 540-residue polypeptide: ATP-dependent RNA helicase DBP5 (540 aa).

Composition is skewed to basic and acidic residues over residues 24-36 (KSGEKLEEIKKGS) and 50-119 (KEGD…EPKE). A disordered region spans residues 24–124 (KSGEKLEEIK…KEPKEPATNL (101 aa)). The Q motif signature appears at 150–178 (KSFEELGLSPELLKGLYAMKFNKPSKIQE). The region spanning 183-350 (LLLSNPPRNM…ERLVPDANSL (168 aa)) is the Helicase ATP-binding domain. Residue 196-203 (SQSGTGKT) coordinates ATP. Positions 297-300 (DEAD) match the DEAD box motif. The Helicase C-terminal domain occupies 361 to 538 (GIKQLYMDCR…EVEKIVKKVI (178 aa)).

This sequence belongs to the DEAD box helicase family. DDX19/DBP5 subfamily. In terms of assembly, associates with the nuclear pore complex.

The protein localises to the cytoplasm. It is found in the nucleus. It localises to the nuclear pore complex. The protein resides in the nucleus membrane. The catalysed reaction is ATP + H2O = ADP + phosphate + H(+). ATP-dependent RNA helicase associated with the nuclear pore complex and essential for mRNA export from the nucleus. May participate in a terminal step of mRNA export through the removal of proteins that accompany mRNA through the nucleopore complex. May also be involved in early transcription. The chain is ATP-dependent RNA helicase DBP5 (DBP5) from Candida albicans (strain SC5314 / ATCC MYA-2876) (Yeast).